Here is a 157-residue protein sequence, read N- to C-terminus: Phosphopantetheine adenylyltransferase (157 aa).

A substrate-binding site is contributed by Ser-8. Residues 8 to 9 (SF) and His-16 each bind ATP. The substrate site is built by Lys-40, Thr-72, and Arg-86. ATP contacts are provided by residues 87–89 (GLR), Glu-97, and 122–128 (HSFLSSS).

It belongs to the bacterial CoaD family. In terms of assembly, homohexamer. It depends on Mg(2+) as a cofactor.

It is found in the cytoplasm. The catalysed reaction is (R)-4'-phosphopantetheine + ATP + H(+) = 3'-dephospho-CoA + diphosphate. It functions in the pathway cofactor biosynthesis; coenzyme A biosynthesis; CoA from (R)-pantothenate: step 4/5. Functionally, reversibly transfers an adenylyl group from ATP to 4'-phosphopantetheine, yielding dephospho-CoA (dPCoA) and pyrophosphate. The chain is Phosphopantetheine adenylyltransferase from Prochlorococcus marinus (strain MIT 9303).